An 890-amino-acid polypeptide reads, in one-letter code: Bacteriocin BCN5 (890 aa).

2 SH3b domains span residues 22 to 84 (PPNA…TNAT) and 179 to 241 (ENNA…TNAT). A Peptidase M14 domain is found at 303-549 (GYVKYEGAAA…RYLQKIINAV (247 aa)). Residues histidine 358, glutamate 361, and histidine 475 each coordinate Zn(2+). The Proton donor/acceptor role is filled by glutamate 525. The 65-residue stretch at 572–636 (EATGEVINVQ…VNSGYIIILK (65 aa)) folds into the SH3b 3 domain. Residues 815–869 (KALAAAVIVNGVETMFCAFLGGFIAQCIAPEFPIVAAVAGAIVSAIAAFAIGYFV) form a hydrophobic region.

It depends on Zn(2+) as a cofactor.

Its function is as follows. May function as an ionophore. The sequence is that of Bacteriocin BCN5 (bcn) from Clostridium perfringens.